Reading from the N-terminus, the 268-residue chain is Enoyl-[acyl-carrier-protein] reductase [NADH] 2 (268 aa).

NAD(+) contacts are provided by residues glycine 14, 20-21, glutamine 41, 65-66, and isoleucine 93; these read SI and DV. Active-site proton acceptor residues include tyrosine 146 and tyrosine 156. NAD(+) is bound by residues lysine 163 and 192–196; that span reads IRTLA.

This sequence belongs to the short-chain dehydrogenases/reductases (SDR) family. FabI subfamily.

Its subcellular location is the cell inner membrane. It catalyses the reaction a 2,3-saturated acyl-[ACP] + NAD(+) = a (2E)-enoyl-[ACP] + NADH + H(+). The protein operates within lipid metabolism; fatty acid biosynthesis. This Rhizobium meliloti (strain 1021) (Ensifer meliloti) protein is Enoyl-[acyl-carrier-protein] reductase [NADH] 2 (fabI2).